The chain runs to 533 residues: Acid-sensing ion channel 2 (533 aa).

A compositionally biased stretch (basic and acidic residues) spans M1–E16. Positions M1 to L23 are disordered. Over M1–A68 the chain is Cytoplasmic. A helical transmembrane segment spans residues A69–L89. Residues S90–E445 lie on the Extracellular side of the membrane. Intrachain disulfides connect C113–C214, C310–C385, C328–C381, C332–C379, C341–C363, and C343–C355. N163 carries an N-linked (GlcNAc...) asparagine glycan. N386 and N413 each carry an N-linked (GlcNAc...) asparagine glycan. The helical transmembrane segment at V446 to L466 threads the bilayer. The GAS motif; ion selectivity filter signature appears at G462–S464. The Cytoplasmic segment spans residues T467–C533.

This sequence belongs to the amiloride-sensitive sodium channel (TC 1.A.6) family. ASIC2 subfamily. As to quaternary structure, can form homotrimers; probably non-functional. Heterotrimer; could form functional heterotrimers producing channel with specific properties depending on their composition. In terms of tissue distribution, expressed in central nervous system.

The protein resides in the cell membrane. The enzyme catalyses Na(+)(in) = Na(+)(out). Its activity is regulated as follows. Inhibited by the diuretic drug amiloride. Could form pH-gated heterotrimeric sodium channels that act as postsynaptic excitatory sensors in the nervous system, generating rapid, transient inward currents that fully desensitize upon extracellular acidification. The sequence is that of Acid-sensing ion channel 2 (asic2) from Danio rerio (Zebrafish).